A 199-amino-acid chain; its full sequence is Fe/S biogenesis protein NfuA (199 aa).

2 residues coordinate [4Fe-4S] cluster: C151 and C154.

This sequence belongs to the NfuA family. Homodimer. It depends on [4Fe-4S] cluster as a cofactor.

Functionally, involved in iron-sulfur cluster biogenesis. Binds a 4Fe-4S cluster, can transfer this cluster to apoproteins, and thereby intervenes in the maturation of Fe/S proteins. Could also act as a scaffold/chaperone for damaged Fe/S proteins. This Stenotrophomonas maltophilia (strain R551-3) protein is Fe/S biogenesis protein NfuA.